Consider the following 79-residue polypeptide: Large ribosomal subunit protein uL24 (79 aa).

The segment at 1 to 29 (MPKLKKLLLKVSTSKPNTNPPSQNEEKGT) is disordered. Positions 11 to 23 (VSTSKPNTNPPSQ) are enriched in polar residues.

It belongs to the universal ribosomal protein uL24 family. Part of the 50S ribosomal subunit.

Its function is as follows. One of two assembly initiator proteins, it binds directly to the 5'-end of the 23S rRNA, where it nucleates assembly of the 50S subunit. Functionally, one of the proteins that surrounds the polypeptide exit tunnel on the outside of the subunit. In Onion yellows phytoplasma (strain OY-M), this protein is Large ribosomal subunit protein uL24 (rplX).